The chain runs to 512 residues: MAEPSVESSSPGGSATSDDHEFDPSADMLVHDFDDERTLEEEEMMEGETNFSSEIEDLAREGDMPIHELLSLYGYGSTVRLPEEDEEEEEEEEEGEDDEDADNDDNSGCSGENKEENIKDSSGQEDETQSSNDDPSQSVASQDAQEIIRPRRCKYFDTNSEVEEESEEDEDYIPSEDWKKEIMVGSMFQAEIPVGICRYKENEKVYENDDQLLWDPEYLPEDKVIIFLKDASRRTGDEKGVEAIPEGSHIKDNEQALYELVKCNFDTEEALRRLRFNVKAAREELSVWTEEECRNFEQGLKAYGKDFHLIQANKVRTRSVGECVAFYYMWKKSERYDFFAQQTRFGKKKYNLHPGVTDYMDRLLDESESAASSRAPSPPPTASNSSNSQSEKEDGTVSTTNQNGVSSNGPGEILNKEEVKVEGLHINGPTGGNKKPLHADMDTNGYETDNLTTDPKLAHMTARNENDFDEKSERPAKRRRVNSNGKESPGSSEFFQEAVSHGKFEELENTDD.

The span at 1–16 shows a compositional bias: low complexity; sequence MAEPSVESSSPGGSAT. Disordered regions lie at residues 1 to 63 and 75 to 173; these read MAEP…REGD and YGST…EDYI. At serine 10 the chain carries Phosphoserine. A compositionally biased stretch (basic and acidic residues) spans 17 to 36; it reads SDDHEFDPSADMLVHDFDDE. Composition is skewed to acidic residues over residues 37-46 and 83-105; these read RTLEEEEMME and EEDEEEEEEEEEGEDDEDADNDD. The span at 129 to 144 shows a compositional bias: polar residues; it reads QSSNDDPSQSVASQDA. Position 141 is a phosphoserine (serine 141). Tyrosine 155 carries the phosphotyrosine modification. 2 positions are modified to phosphoserine: serine 160 and serine 166. Positions 160–173 are enriched in acidic residues; the sequence is SEVEEESEEDEDYI. The region spanning 180-278 is the ELM2 domain; it reads KEIMVGSMFQ…EALRRLRFNV (99 aa). The tract at residues 180-284 is interaction with HDAC1; it reads KEIMVGSMFQ…RFNVKAAREE (105 aa). Lysine 239 participates in a covalent cross-link: Glycyl lysine isopeptide (Lys-Gly) (interchain with G-Cter in SUMO2). Positions 283–335 constitute an SANT domain; that stretch reads EELSVWTEEECRNFEQGLKAYGKDFHLIQANKVRTRSVGECVAFYYMWKKSER. Residues 366 to 512 form a disordered region; the sequence is ESESAASSRA…KFEELENTDD (147 aa). Serine 367, serine 369, and serine 377 each carry phosphoserine. Polar residues predominate over residues 396–409; sequence TVSTTNQNGVSSNG. A compositionally biased stretch (basic and acidic residues) spans 414–423; that stretch reads LNKEEVKVEG. A Glycyl lysine isopeptide (Lys-Gly) (interchain with G-Cter in SUMO2) cross-link involves residue lysine 420. Position 448 is a phosphothreonine (threonine 448). The span at 462 to 475 shows a compositional bias: basic and acidic residues; the sequence is ARNENDFDEKSERP. The segment covering 482-494 has biased composition (polar residues); it reads NSNGKESPGSSEF. Residues serine 483, serine 488, and serine 491 each carry the phosphoserine modification.

Interacts with HDAC1. Part of a complex containing at least CDYL, MIER1, MIER2, HDAC1 and HDAC2.

Its subcellular location is the nucleus. Transcriptional repressor regulating the expression of a number of genes including SP1 target genes. Probably functions through recruitment of HDAC1 a histone deacetylase involved in chromatin silencing. This is Mesoderm induction early response protein 1 (MIER1) from Pongo abelii (Sumatran orangutan).